Consider the following 182-residue polypeptide: UPF0397 protein SAG1634 (182 aa).

Helical transmembrane passes span 9 to 29 (VVAT…VNIP), 42 to 62 (AVLA…TGFI), 74 to 94 (SPWW…GFFA), 109 to 129 (LLLF…VVAP), and 148 to 168 (FLSS…LLLA).

This sequence belongs to the UPF0397 family.

The protein resides in the cell membrane. In Streptococcus agalactiae serotype V (strain ATCC BAA-611 / 2603 V/R), this protein is UPF0397 protein SAG1634.